The primary structure comprises 283 residues: GTPase Era (283 aa).

The Era-type G domain maps to Tyr-7 to Glu-175. Positions Gly-15–Ser-22 are G1. Gly-15–Ser-22 is a GTP binding site. Residues Asn-41–Ser-45 are G2. The segment at Asp-62–Gly-65 is G3. GTP-binding positions include Asp-62–Val-66 and Asn-124–Asp-127. Positions Asn-124–Asp-127 are G4. Residues Ile-154–Ala-156 form a G5 region. The 86-residue stretch at Ile-198–Asn-283 folds into the KH type-2 domain.

Belongs to the TRAFAC class TrmE-Era-EngA-EngB-Septin-like GTPase superfamily. Era GTPase family. In terms of assembly, monomer.

The protein localises to the cytoplasm. The protein resides in the cell membrane. Its function is as follows. An essential GTPase that binds both GDP and GTP, with rapid nucleotide exchange. Plays a role in 16S rRNA processing and 30S ribosomal subunit biogenesis and possibly also in cell cycle regulation and energy metabolism. The chain is GTPase Era from Buchnera aphidicola subsp. Acyrthosiphon pisum (strain APS) (Acyrthosiphon pisum symbiotic bacterium).